We begin with the raw amino-acid sequence, 351 residues long: Small ribosomal subunit biogenesis GTPase RsgA (351 aa).

A CP-type G domain is found at 107–277 (ENLLQRPDNF…LIDSPGIREF (171 aa)). GTP-binding positions include 163–166 (NKTD) and 219–227 (GQSGVGKSS). Cys301, Cys306, His308, and Cys314 together coordinate Zn(2+).

Belongs to the TRAFAC class YlqF/YawG GTPase family. RsgA subfamily. As to quaternary structure, monomer. Associates with 30S ribosomal subunit, binds 16S rRNA. It depends on Zn(2+) as a cofactor.

Its subcellular location is the cytoplasm. In terms of biological role, one of several proteins that assist in the late maturation steps of the functional core of the 30S ribosomal subunit. Helps release RbfA from mature subunits. May play a role in the assembly of ribosomal proteins into the subunit. Circularly permuted GTPase that catalyzes slow GTP hydrolysis, GTPase activity is stimulated by the 30S ribosomal subunit. The protein is Small ribosomal subunit biogenesis GTPase RsgA of Marinobacter nauticus (strain ATCC 700491 / DSM 11845 / VT8) (Marinobacter aquaeolei).